We begin with the raw amino-acid sequence, 250 residues long: UPF0259 membrane protein SG1383 (250 aa).

A run of 6 helical transmembrane segments spans residues 20-40, 86-106, 121-141, 146-166, 191-211, and 219-239; these read FASI…LGHA, AGTL…LTMI, IGLS…TTLL, LLLI…APVI, LLAP…LLAT, and LVAV…LLIY.

The protein belongs to the UPF0259 family.

It localises to the cell inner membrane. In Sodalis glossinidius (strain morsitans), this protein is UPF0259 membrane protein SG1383.